Reading from the N-terminus, the 288-residue chain is Peptidyl-tRNA hydrolase, chloroplastic (288 aa).

Residues 1–55 constitute a chloroplast transit peptide; that stretch reads MKAVAFPAKIANLSFPSNCCSLFFRSPATFLSPALPCRKLTKGIRGLEGLMSQCL. Tyrosine 107 contacts tRNA. The active-site Proton acceptor is the histidine 112. Positions 157, 159, and 205 each coordinate tRNA.

It belongs to the PTH family. In terms of assembly, monomer.

It localises to the plastid. It is found in the chloroplast stroma. It carries out the reaction an N-acyl-L-alpha-aminoacyl-tRNA + H2O = an N-acyl-L-amino acid + a tRNA + H(+). The natural substrate for this enzyme may be peptidyl-tRNAs which drop off the ribosome during protein synthesis. The polypeptide is Peptidyl-tRNA hydrolase, chloroplastic (Arabidopsis thaliana (Mouse-ear cress)).